Consider the following 509-residue polypeptide: ATP synthase subunit alpha (509 aa).

169–176 serves as a coordination point for ATP; that stretch reads GDRQTGKT.

The protein belongs to the ATPase alpha/beta chains family. In terms of assembly, F-type ATPases have 2 components, CF(1) - the catalytic core - and CF(0) - the membrane proton channel. CF(1) has five subunits: alpha(3), beta(3), gamma(1), delta(1), epsilon(1). CF(0) has three main subunits: a(1), b(2) and c(9-12). The alpha and beta chains form an alternating ring which encloses part of the gamma chain. CF(1) is attached to CF(0) by a central stalk formed by the gamma and epsilon chains, while a peripheral stalk is formed by the delta and b chains.

It is found in the cell inner membrane. The enzyme catalyses ATP + H2O + 4 H(+)(in) = ADP + phosphate + 5 H(+)(out). In terms of biological role, produces ATP from ADP in the presence of a proton gradient across the membrane. The alpha chain is a regulatory subunit. The protein is ATP synthase subunit alpha of Methylocella silvestris (strain DSM 15510 / CIP 108128 / LMG 27833 / NCIMB 13906 / BL2).